A 426-amino-acid polypeptide reads, in one-letter code: Glutamate-1-semialdehyde 2,1-aminomutase (426 aa).

An N6-(pyridoxal phosphate)lysine modification is found at lysine 265.

The protein belongs to the class-III pyridoxal-phosphate-dependent aminotransferase family. HemL subfamily. As to quaternary structure, homodimer. Requires pyridoxal 5'-phosphate as cofactor.

The protein resides in the cytoplasm. The enzyme catalyses (S)-4-amino-5-oxopentanoate = 5-aminolevulinate. Its pathway is porphyrin-containing compound metabolism; protoporphyrin-IX biosynthesis; 5-aminolevulinate from L-glutamyl-tRNA(Glu): step 2/2. This chain is Glutamate-1-semialdehyde 2,1-aminomutase (hemL), found in Salmonella typhimurium (strain SL1344).